A 310-amino-acid chain; its full sequence is tRNA pseudouridine synthase B (310 aa).

Aspartate 37 acts as the Nucleophile in catalysis.

It belongs to the pseudouridine synthase TruB family. Type 1 subfamily.

It catalyses the reaction uridine(55) in tRNA = pseudouridine(55) in tRNA. Functionally, responsible for synthesis of pseudouridine from uracil-55 in the psi GC loop of transfer RNAs. The sequence is that of tRNA pseudouridine synthase B from Deinococcus deserti (strain DSM 17065 / CIP 109153 / LMG 22923 / VCD115).